The following is a 175-amino-acid chain: UPF0398 protein SPH_0478 (175 aa).

This sequence belongs to the UPF0398 family.

In Streptococcus pneumoniae (strain Hungary19A-6), this protein is UPF0398 protein SPH_0478.